The chain runs to 339 residues: tRNA-splicing endonuclease (339 aa).

Active-site residues include Tyr274, His285, and Lys316.

This sequence belongs to the tRNA-intron endonuclease family. Archaeal long subfamily. In terms of assembly, homodimer. Ca(2+) is required as a cofactor. It depends on Mg(2+) as a cofactor. Post-translationally, the N-terminus is blocked.

It carries out the reaction pretRNA = a 3'-half-tRNA molecule with a 5'-OH end + a 5'-half-tRNA molecule with a 2',3'-cyclic phosphate end + an intron with a 2',3'-cyclic phosphate and a 5'-hydroxyl terminus.. Functionally, endonuclease that removes tRNA introns. Cleaves pre-tRNA at the 5'- and 3'-splice sites to release the intron. The products are an intron and two tRNA half-molecules bearing 2',3' cyclic phosphate and 5'-OH termini. Recognizes a pseudosymmetric substrate in which 2 bulged loops of 3 bases are separated by a stem of 4 bp. The sequence is that of tRNA-splicing endonuclease from Haloferax volcanii (strain ATCC 29605 / DSM 3757 / JCM 8879 / NBRC 14742 / NCIMB 2012 / VKM B-1768 / DS2) (Halobacterium volcanii).